An 89-amino-acid chain; its full sequence is Small ribosomal subunit protein bS20 (89 aa).

A disordered region spans residues 1 to 28 (MTLANIKSAKKRAIQSEKRRQHNASQRS).

Belongs to the bacterial ribosomal protein bS20 family.

Its function is as follows. Binds directly to 16S ribosomal RNA. This is Small ribosomal subunit protein bS20 from Pasteurella multocida (strain Pm70).